The sequence spans 457 residues: Zinc finger protein ZIPIC (457 aa).

The 82-residue stretch at 3–84 (CCICQFSVRV…ILELIHSPYM (82 aa)) folds into the ZAD domain. C2H2-type zinc fingers lie at residues 257–280 (IQCP…KREH), 284–306 (YVCD…LQNH), 312–334 (FACP…MAWH), 340–362 (YQCD…KMIH), 369–391 (LECQ…MRSH), and 397–419 (FACP…LREH). The C2H2-type 7; degenerate zinc-finger motif lies at 430 to 448 (FHCSKCTHTFINEQNYDAH).

In terms of assembly, interacts (via region between the ZAD domain and the first zinc finger domain) with Cp190 (via centrosomal targeting M domain); the interaction is direct. Interacts with pita.

Its subcellular location is the nucleus. It is found in the chromosome. Insulator DNA-binding protein. Recruits Cp190 and cooperatively binds to chromatin promoter regions to exert transcriptional regulator and chromatin insulator functions. Chromatin insulators are regulatory elements that establish independent domains of transcriptional activity within eukaryotic genomes. Insulators are proposed to structure the chromatin fiber into independent domains of differing transcriptional potential by promoting the formation of distinct chromatin loops to form topologically associating domains (TADs). Chromatin binding sites often cluster with those of other insulator DNA-binding proteins such as pita, CTCF and BEAF-32, but not Su(Hw). The chain is Zinc finger protein ZIPIC from Drosophila melanogaster (Fruit fly).